The primary structure comprises 86 residues: Large ribosomal subunit protein eL30 (86 aa).

Belongs to the eukaryotic ribosomal protein eL30 family.

This chain is Large ribosomal subunit protein eL30 (rpl30e), found in Archaeoglobus fulgidus (strain ATCC 49558 / DSM 4304 / JCM 9628 / NBRC 100126 / VC-16).